We begin with the raw amino-acid sequence, 508 residues long: Photosystem II CP47 reaction center protein (508 aa).

6 consecutive transmembrane segments (helical) span residues 21–36 (SVHI…WAGS), 101–115 (IVFS…IWHW), 140–156 (GIHL…FGAF), 203–218 (IAAG…FHLS), 237–252 (VLSS…AFVV), and 457–472 (SFAL…HGAR).

Belongs to the PsbB/PsbC family. PsbB subfamily. As to quaternary structure, PSII is composed of 1 copy each of membrane proteins PsbA, PsbB, PsbC, PsbD, PsbE, PsbF, PsbH, PsbI, PsbJ, PsbK, PsbL, PsbM, PsbT, PsbX, PsbY, PsbZ, Psb30/Ycf12, at least 3 peripheral proteins of the oxygen-evolving complex and a large number of cofactors. It forms dimeric complexes. It depends on Binds multiple chlorophylls. PSII binds additional chlorophylls, carotenoids and specific lipids. as a cofactor.

Its subcellular location is the plastid. The protein localises to the chloroplast thylakoid membrane. Its function is as follows. One of the components of the core complex of photosystem II (PSII). It binds chlorophyll and helps catalyze the primary light-induced photochemical processes of PSII. PSII is a light-driven water:plastoquinone oxidoreductase, using light energy to abstract electrons from H(2)O, generating O(2) and a proton gradient subsequently used for ATP formation. This chain is Photosystem II CP47 reaction center protein, found in Eucalyptus globulus subsp. globulus (Tasmanian blue gum).